The sequence spans 79 residues: Exodeoxyribonuclease 7 small subunit (79 aa).

Belongs to the XseB family. In terms of assembly, heterooligomer composed of large and small subunits.

The protein resides in the cytoplasm. It carries out the reaction Exonucleolytic cleavage in either 5'- to 3'- or 3'- to 5'-direction to yield nucleoside 5'-phosphates.. Functionally, bidirectionally degrades single-stranded DNA into large acid-insoluble oligonucleotides, which are then degraded further into small acid-soluble oligonucleotides. The protein is Exodeoxyribonuclease 7 small subunit of Syntrophus aciditrophicus (strain SB).